Consider the following 864-residue polypeptide: Translation initiation factor IF-2 (864 aa).

The tract at residues 1 to 252 (MEDKNKTIKE…KTSSDKRDFS (252 aa)) is disordered. Over residues 78 to 90 (KEVKYEESSRKQD) the composition is skewed to basic and acidic residues. The span at 106–120 (VRPSGDSSYPVSRSP) shows a compositional bias: polar residues. Residues 150–212 (RGPGQGGGYQ…PGNRSGGPGG (63 aa)) show a composition bias toward gly residues. The span at 239 to 252 (HDKEKTSSDKRDFS) shows a compositional bias: basic and acidic residues. A tr-type G domain is found at 359–528 (NRPPVVTIMG…LLQAEVMDLK (170 aa)). Positions 368–375 (GHVDHGKT) are G1. 368–375 (GHVDHGKT) is a binding site for GTP. A G2 region spans residues 393 to 397 (GITQH). The interval 414–417 (DTPG) is G3. Residues 414-418 (DTPGH) and 468-471 (NKID) contribute to the GTP site. Positions 468–471 (NKID) are G4. A G5 region spans residues 504 to 506 (SAR).

The protein belongs to the TRAFAC class translation factor GTPase superfamily. Classic translation factor GTPase family. IF-2 subfamily.

It localises to the cytoplasm. Functionally, one of the essential components for the initiation of protein synthesis. Protects formylmethionyl-tRNA from spontaneous hydrolysis and promotes its binding to the 30S ribosomal subunits. Also involved in the hydrolysis of GTP during the formation of the 70S ribosomal complex. This Leptospira borgpetersenii serovar Hardjo-bovis (strain L550) protein is Translation initiation factor IF-2.